The sequence spans 77 residues: Translation initiation factor IF-1, chloroplastic (77 aa).

Residues 1 to 71 (MKEQKWIHEG…TRGRIIYRLR (71 aa)) enclose the S1-like domain.

Belongs to the IF-1 family. In terms of assembly, component of the 30S ribosomal translation pre-initiation complex which assembles on the 30S ribosome in the order IF-2 and IF-3, IF-1 and N-formylmethionyl-tRNA(fMet); mRNA recruitment can occur at any time during PIC assembly.

It is found in the plastid. Its subcellular location is the chloroplast. Its function is as follows. One of the essential components for the initiation of protein synthesis. Stabilizes the binding of IF-2 and IF-3 on the 30S subunit to which N-formylmethionyl-tRNA(fMet) subsequently binds. Helps modulate mRNA selection, yielding the 30S pre-initiation complex (PIC). Upon addition of the 50S ribosomal subunit IF-1, IF-2 and IF-3 are released leaving the mature 70S translation initiation complex. This chain is Translation initiation factor IF-1, chloroplastic, found in Hedera helix (English ivy).